The chain runs to 371 residues: Methylthioribose-1-phosphate isomerase (371 aa).

Substrate contacts are provided by residues 53–55 (RGA), Arg90, and Gln203. The active-site Proton donor is Asp243. 253 to 254 (NK) contributes to the substrate binding site.

The protein belongs to the eIF-2B alpha/beta/delta subunits family. MtnA subfamily.

The enzyme catalyses 5-(methylsulfanyl)-alpha-D-ribose 1-phosphate = 5-(methylsulfanyl)-D-ribulose 1-phosphate. It catalyses the reaction 5-deoxy-alpha-D-ribose 1-phosphate = 5-deoxy-D-ribulose 1-phosphate. It participates in amino-acid biosynthesis; L-methionine biosynthesis via salvage pathway; L-methionine from S-methyl-5-thio-alpha-D-ribose 1-phosphate: step 1/6. In terms of biological role, catalyzes the interconversion of methylthioribose-1-phosphate (MTR-1-P) into methylthioribulose-1-phosphate (MTRu-1-P). Also catalyzes the interconversion of 5-deoxyribose 1-phosphate and 5-deoxyribulose 1-phosphate. Part of a bifunctional DHAP-shunt salvage pathway for SAM by-products. The sequence is that of Methylthioribose-1-phosphate isomerase from Escherichia coli O45:K1 (strain S88 / ExPEC).